The sequence spans 405 residues: Tryptophan synthase beta chain (405 aa).

The residue at position 95 (Lys-95) is an N6-(pyridoxal phosphate)lysine.

Belongs to the TrpB family. Tetramer of two alpha and two beta chains. It depends on pyridoxal 5'-phosphate as a cofactor.

It carries out the reaction (1S,2R)-1-C-(indol-3-yl)glycerol 3-phosphate + L-serine = D-glyceraldehyde 3-phosphate + L-tryptophan + H2O. Its pathway is amino-acid biosynthesis; L-tryptophan biosynthesis; L-tryptophan from chorismate: step 5/5. In terms of biological role, the beta subunit is responsible for the synthesis of L-tryptophan from indole and L-serine. The sequence is that of Tryptophan synthase beta chain (trpB) from Pseudomonas putida (Arthrobacter siderocapsulatus).